The primary structure comprises 53 residues: Large ribosomal subunit protein eL40 (53 aa).

The protein belongs to the eukaryotic ribosomal protein eL40 family.

The sequence is that of Large ribosomal subunit protein eL40 from Pyrobaculum arsenaticum (strain DSM 13514 / JCM 11321 / PZ6).